A 320-amino-acid polypeptide reads, in one-letter code: Geranylgeranyl pyrophosphate synthase (320 aa).

Lysine 35, arginine 38, and histidine 67 together coordinate isopentenyl diphosphate. Aspartate 74 and aspartate 78 together coordinate Mg(2+). Residue arginine 83 coordinates dimethylallyl diphosphate. Arginine 84 contacts isopentenyl diphosphate. Positions 168, 169, 206, 223, and 233 each coordinate dimethylallyl diphosphate.

This sequence belongs to the FPP/GGPP synthase family. The cofactor is Mg(2+).

The protein resides in the cytoplasm. The enzyme catalyses isopentenyl diphosphate + dimethylallyl diphosphate = (2E)-geranyl diphosphate + diphosphate. It carries out the reaction isopentenyl diphosphate + (2E)-geranyl diphosphate = (2E,6E)-farnesyl diphosphate + diphosphate. It catalyses the reaction isopentenyl diphosphate + (2E,6E)-farnesyl diphosphate = (2E,6E,10E)-geranylgeranyl diphosphate + diphosphate. Its pathway is isoprenoid biosynthesis; farnesyl diphosphate biosynthesis; farnesyl diphosphate from geranyl diphosphate and isopentenyl diphosphate: step 1/1. It participates in isoprenoid biosynthesis; geranyl diphosphate biosynthesis; geranyl diphosphate from dimethylallyl diphosphate and isopentenyl diphosphate: step 1/1. The protein operates within isoprenoid biosynthesis; geranylgeranyl diphosphate biosynthesis; geranylgeranyl diphosphate from farnesyl diphosphate and isopentenyl diphosphate: step 1/1. Functionally, catalyzes the trans-addition of the 3 molecules of IPP onto DMAPP to form geranylgeranyl pyrophosphate. May be involved in vesicle trafficking and protein sorting. The chain is Geranylgeranyl pyrophosphate synthase (BTS1) from Eremothecium gossypii (strain ATCC 10895 / CBS 109.51 / FGSC 9923 / NRRL Y-1056) (Yeast).